The primary structure comprises 256 residues: Endonuclease NucS (256 aa).

The segment at alanine 62–lysine 97 is disordered.

It belongs to the NucS endonuclease family.

The protein localises to the cytoplasm. Functionally, cleaves both 3' and 5' ssDNA extremities of branched DNA structures. In Bifidobacterium longum (strain NCC 2705), this protein is Endonuclease NucS.